The chain runs to 241 residues: ATP synthase subunit a (241 aa).

The next 6 membrane-spanning stretches (helical) occupy residues 19–39 (AVLI…AKMA), 80–100 (LVAA…IPGF), 106–126 (NINV…YEGI), 135–155 (FAHF…IEIV), 177–197 (LFLW…AYLL), and 203–223 (LLQT…AVAI).

Belongs to the ATPase A chain family. F-type ATPases have 2 components, CF(1) - the catalytic core - and CF(0) - the membrane proton channel. CF(1) has five subunits: alpha(3), beta(3), gamma(1), delta(1), epsilon(1). CF(0) has three main subunits: a(1), b(2) and c(9-12). The alpha and beta chains form an alternating ring which encloses part of the gamma chain. CF(1) is attached to CF(0) by a central stalk formed by the gamma and epsilon chains, while a peripheral stalk is formed by the delta and b chains.

Its subcellular location is the cell inner membrane. Its function is as follows. Key component of the proton channel; it plays a direct role in the translocation of protons across the membrane. The chain is ATP synthase subunit a from Sulfurovum sp. (strain NBC37-1).